Reading from the N-terminus, the 155-residue chain is DNA-directed RNA polymerase 1A (155 aa).

Aspartate 88 is a catalytic residue.

Belongs to the phage and mitochondrial RNA polymerase family.

It carries out the reaction RNA(n) + a ribonucleoside 5'-triphosphate = RNA(n+1) + diphosphate. DNA-dependent RNA polymerase catalyzes the transcription of DNA into RNA using the four ribonucleoside triphosphates as substrates. The protein is DNA-directed RNA polymerase 1A (RPOT1-SYL) of Nicotiana tabacum (Common tobacco).